Consider the following 190-residue polypeptide: 7-methyl-GTP pyrophosphatase (190 aa).

Residue Asp69 is the Proton acceptor of the active site.

It belongs to the Maf family. YceF subfamily. A divalent metal cation serves as cofactor.

Its subcellular location is the cytoplasm. It catalyses the reaction N(7)-methyl-GTP + H2O = N(7)-methyl-GMP + diphosphate + H(+). Functionally, nucleoside triphosphate pyrophosphatase that hydrolyzes 7-methyl-GTP (m(7)GTP). May have a dual role in cell division arrest and in preventing the incorporation of modified nucleotides into cellular nucleic acids. This Xanthomonas oryzae pv. oryzae (strain MAFF 311018) protein is 7-methyl-GTP pyrophosphatase.